Here is a 405-residue protein sequence, read N- to C-terminus: Polyketide biosynthesis cytochrome P450 PksS (405 aa).

A helical membrane pass occupies residues 231-251; it reads LYSMLFLLVVAGLETTVNLLG. A heme-binding site is contributed by cysteine 352.

It belongs to the cytochrome P450 family.

It localises to the cell membrane. It functions in the pathway antibiotic biosynthesis; bacillaene biosynthesis. Involved in the metabolism of the antibiotic polyketide bacillaene which is involved in secondary metabolism. The substrate is dihydrobacillaene. This chain is Polyketide biosynthesis cytochrome P450 PksS (pksS), found in Bacillus subtilis (strain 168).